The chain runs to 98 residues: Large ribosomal subunit protein uL23 (98 aa).

This sequence belongs to the universal ribosomal protein uL23 family. In terms of assembly, part of the 50S ribosomal subunit. Contacts protein L29, and trigger factor when it is bound to the ribosome.

One of the early assembly proteins it binds 23S rRNA. One of the proteins that surrounds the polypeptide exit tunnel on the outside of the ribosome. Forms the main docking site for trigger factor binding to the ribosome. This is Large ribosomal subunit protein uL23 from Cereibacter sphaeroides (strain ATCC 17029 / ATH 2.4.9) (Rhodobacter sphaeroides).